We begin with the raw amino-acid sequence, 392 residues long: Glucan endo-1,3-beta-glucosidase 14 (392 aa).

The N-terminal stretch at M1 to S21 is a signal peptide. Residues N54 and N89 are each glycosylated (N-linked (GlcNAc...) asparagine). E122 functions as the Proton donor in the catalytic mechanism. The Nucleophile role is filled by E267. The GPI-anchor amidated serine moiety is linked to residue S359. The propeptide at R360 to R392 is removed in mature form.

This sequence belongs to the glycosyl hydrolase 17 family.

Its subcellular location is the cell membrane. It is found in the secreted. The protein localises to the cell wall. The protein resides in the cytoplasm. The enzyme catalyses Hydrolysis of (1-&gt;3)-beta-D-glucosidic linkages in (1-&gt;3)-beta-D-glucans.. This chain is Glucan endo-1,3-beta-glucosidase 14, found in Arabidopsis thaliana (Mouse-ear cress).